Reading from the N-terminus, the 368-residue chain is Histidinol-phosphate aminotransferase (368 aa).

An N6-(pyridoxal phosphate)lysine modification is found at K226.

This sequence belongs to the class-II pyridoxal-phosphate-dependent aminotransferase family. Histidinol-phosphate aminotransferase subfamily. Homodimer. Pyridoxal 5'-phosphate serves as cofactor.

It carries out the reaction L-histidinol phosphate + 2-oxoglutarate = 3-(imidazol-4-yl)-2-oxopropyl phosphate + L-glutamate. Its pathway is amino-acid biosynthesis; L-histidine biosynthesis; L-histidine from 5-phospho-alpha-D-ribose 1-diphosphate: step 7/9. This is Histidinol-phosphate aminotransferase from Colwellia psychrerythraea (strain 34H / ATCC BAA-681) (Vibrio psychroerythus).